An 831-amino-acid polypeptide reads, in one-letter code: Periplasmic nitrate reductase (831 aa).

A signal peptide (tat-type signal) is located at residues 1–29 (MKISRRDFIKQTAITATASVAGVTLPAGA). One can recognise a 4Fe-4S Mo/W bis-MGD-type domain in the interval 41 to 97 (LKWSKAPCRFCGTGCGVTVAVKDNKVVATQGDPQAEVNKGLNCVKGYFLSKIMYGQD). 4 residues coordinate [4Fe-4S] cluster: cysteine 48, cysteine 51, cysteine 55, and cysteine 83. Mo-bis(molybdopterin guanine dinucleotide) contacts are provided by residues lysine 85, glutamine 152, asparagine 177, cysteine 181, 214–221 (WGSNMAEM), 245–249 (STFTH), 264–266 (QTD), methionine 375, glutamine 379, asparagine 485, 511–512 (SD), lysine 534, aspartate 561, and 721–730 (TGRVLEHWHS). A substrate-binding site is contributed by tryptophan 797. Residues asparagine 805 and lysine 822 each contribute to the Mo-bis(molybdopterin guanine dinucleotide) site.

The protein belongs to the prokaryotic molybdopterin-containing oxidoreductase family. NasA/NapA/NarB subfamily. In terms of assembly, component of the periplasmic nitrate reductase NapAB complex composed of NapA and NapB. It depends on [4Fe-4S] cluster as a cofactor. Mo-bis(molybdopterin guanine dinucleotide) is required as a cofactor. Predicted to be exported by the Tat system. The position of the signal peptide cleavage has been experimentally proven.

It is found in the periplasm. The catalysed reaction is 2 Fe(II)-[cytochrome] + nitrate + 2 H(+) = 2 Fe(III)-[cytochrome] + nitrite + H2O. Its function is as follows. Catalytic subunit of the periplasmic nitrate reductase complex NapAB. Receives electrons from NapB and catalyzes the reduction of nitrate to nitrite. The chain is Periplasmic nitrate reductase from Cupriavidus necator (strain ATCC 17699 / DSM 428 / KCTC 22496 / NCIMB 10442 / H16 / Stanier 337) (Ralstonia eutropha).